Reading from the N-terminus, the 100-residue chain is Small ribosomal subunit protein bS21 (100 aa).

The segment at 61–100 (KLQREGLLPMKPKPVFGAGPGGDRGRGPAAGAGAGPRGPR) is disordered. Residues 78 to 100 (AGPGGDRGRGPAAGAGAGPRGPR) show a composition bias toward gly residues.

This sequence belongs to the bacterial ribosomal protein bS21 family.

This chain is Small ribosomal subunit protein bS21, found in Rhodopseudomonas palustris (strain BisB18).